The chain runs to 381 residues: Succinyl-diaminopimelate desuccinylase (381 aa).

Histidine 69 contributes to the Zn(2+) binding site. Aspartate 71 is an active-site residue. Position 103 (aspartate 103) interacts with Zn(2+). The active-site Proton acceptor is glutamate 137. Residues glutamate 138, glutamate 166, and histidine 355 each coordinate Zn(2+).

The protein belongs to the peptidase M20A family. DapE subfamily. As to quaternary structure, homodimer. Zn(2+) is required as a cofactor. Co(2+) serves as cofactor.

It catalyses the reaction N-succinyl-(2S,6S)-2,6-diaminopimelate + H2O = (2S,6S)-2,6-diaminopimelate + succinate. It participates in amino-acid biosynthesis; L-lysine biosynthesis via DAP pathway; LL-2,6-diaminopimelate from (S)-tetrahydrodipicolinate (succinylase route): step 3/3. Catalyzes the hydrolysis of N-succinyl-L,L-diaminopimelic acid (SDAP), forming succinate and LL-2,6-diaminopimelate (DAP), an intermediate involved in the bacterial biosynthesis of lysine and meso-diaminopimelic acid, an essential component of bacterial cell walls. The polypeptide is Succinyl-diaminopimelate desuccinylase (Rickettsia massiliae (strain Mtu5)).